The following is a 364-amino-acid chain: Fructose-bisphosphate aldolase B (364 aa).

Arg56 and Lys147 together coordinate substrate. The Proton acceptor role is filled by Glu188. The active-site Schiff-base intermediate with dihydroxyacetone-P is the Lys230.

Belongs to the class I fructose-bisphosphate aldolase family. As to quaternary structure, homotetramer.

Its subcellular location is the cytoplasm. The protein localises to the cytoskeleton. The protein resides in the microtubule organizing center. It localises to the centrosome. It is found in the centriolar satellite. It carries out the reaction beta-D-fructose 1,6-bisphosphate = D-glyceraldehyde 3-phosphate + dihydroxyacetone phosphate. Its pathway is carbohydrate degradation; glycolysis; D-glyceraldehyde 3-phosphate and glycerone phosphate from D-glucose: step 4/4. This chain is Fructose-bisphosphate aldolase B (aldob), found in Sparus aurata (Gilthead sea bream).